The primary structure comprises 229 residues: NAD(P)H-hydrate epimerase (229 aa).

In terms of domain architecture, YjeF N-terminal spans 9–216; the sequence is AISVDEELFN…KLEEKYAMNL (208 aa). Position 59 to 63 (59 to 63) interacts with (6S)-NADPHX; sequence NNGGD. The K(+) site is built by Asn-60 and Asp-124. (6S)-NADPHX contacts are provided by residues 128–134 and Asp-157; that span reads GFSFKPP. Ser-160 provides a ligand contact to K(+).

Belongs to the NnrE/AIBP family. It depends on K(+) as a cofactor.

It carries out the reaction (6R)-NADHX = (6S)-NADHX. The catalysed reaction is (6R)-NADPHX = (6S)-NADPHX. In terms of biological role, catalyzes the epimerization of the S- and R-forms of NAD(P)HX, a damaged form of NAD(P)H that is a result of enzymatic or heat-dependent hydration. This is a prerequisite for the S-specific NAD(P)H-hydrate dehydratase to allow the repair of both epimers of NAD(P)HX. The protein is NAD(P)H-hydrate epimerase of Anopheles gambiae (African malaria mosquito).